The primary structure comprises 168 residues: Cytolysin secretion protein (168 aa).

In Vibrio vulnificus (strain CMCP6), this protein is Cytolysin secretion protein (vvhB).